The primary structure comprises 227 residues: Cytochrome c oxidase subunit 2 (227 aa).

The Mitochondrial intermembrane segment spans residues 1-14 (MAHAAQVGLQDATS). A helical transmembrane segment spans residues 15-45 (PIMEELIIFHDHALMIIFLICFLVLYALFLT). Topologically, residues 46–59 (LTTKLTNTSISDAQ) are mitochondrial matrix. Residues 60-87 (EMETVWTILPAIILVLIALPSLRILYMT) form a helical membrane-spanning segment. The Mitochondrial intermembrane segment spans residues 88-227 (DEVNDPSFTI…IFEMGPVFTL (140 aa)). Positions 161, 196, 198, 200, 204, and 207 each coordinate Cu cation. A Mg(2+)-binding site is contributed by Glu198.

It belongs to the cytochrome c oxidase subunit 2 family. As to quaternary structure, component of the cytochrome c oxidase (complex IV, CIV), a multisubunit enzyme composed of 14 subunits. The complex is composed of a catalytic core of 3 subunits MT-CO1, MT-CO2 and MT-CO3, encoded in the mitochondrial DNA, and 11 supernumerary subunits COX4I, COX5A, COX5B, COX6A, COX6B, COX6C, COX7A, COX7B, COX7C, COX8 and NDUFA4, which are encoded in the nuclear genome. The complex exists as a monomer or a dimer and forms supercomplexes (SCs) in the inner mitochondrial membrane with NADH-ubiquinone oxidoreductase (complex I, CI) and ubiquinol-cytochrome c oxidoreductase (cytochrome b-c1 complex, complex III, CIII), resulting in different assemblies (supercomplex SCI(1)III(2)IV(1) and megacomplex MCI(2)III(2)IV(2)). Found in a complex with TMEM177, COA6, COX18, COX20, SCO1 and SCO2. Interacts with TMEM177 in a COX20-dependent manner. Interacts with COX20. Interacts with COX16. It depends on Cu cation as a cofactor.

The protein localises to the mitochondrion inner membrane. It catalyses the reaction 4 Fe(II)-[cytochrome c] + O2 + 8 H(+)(in) = 4 Fe(III)-[cytochrome c] + 2 H2O + 4 H(+)(out). Its function is as follows. Component of the cytochrome c oxidase, the last enzyme in the mitochondrial electron transport chain which drives oxidative phosphorylation. The respiratory chain contains 3 multisubunit complexes succinate dehydrogenase (complex II, CII), ubiquinol-cytochrome c oxidoreductase (cytochrome b-c1 complex, complex III, CIII) and cytochrome c oxidase (complex IV, CIV), that cooperate to transfer electrons derived from NADH and succinate to molecular oxygen, creating an electrochemical gradient over the inner membrane that drives transmembrane transport and the ATP synthase. Cytochrome c oxidase is the component of the respiratory chain that catalyzes the reduction of oxygen to water. Electrons originating from reduced cytochrome c in the intermembrane space (IMS) are transferred via the dinuclear copper A center (CU(A)) of subunit 2 and heme A of subunit 1 to the active site in subunit 1, a binuclear center (BNC) formed by heme A3 and copper B (CU(B)). The BNC reduces molecular oxygen to 2 water molecules using 4 electrons from cytochrome c in the IMS and 4 protons from the mitochondrial matrix. This chain is Cytochrome c oxidase subunit 2 (MT-CO2), found in Pan paniscus (Pygmy chimpanzee).